The sequence spans 230 residues: MCRLRVLLLLLPLAFVSSSALPIHDVDSQQNTSGFLGLQRLLQSFSRLFLKNDLLRDLDNFFSSPMDFRDLPRNFHQEENQEHRMGNHTLSSHLQIDKVTDNQTGEVLISEKVEASIEPERNPEGDWKVPKVEAKEPPVPVQKVTDSLHPEPRQVAFWIMKMPRRRTQPDVQDGGRWLIEKRHRMQAIRDGLRGGAREDSLEDGVHIPQHAKLPVRKTHFLYILRPSQQL.

The N-terminal stretch at 1–20 (MCRLRVLLLLLPLAFVSSSA) is a signal peptide. Residues Asn31, Asn87, and Asn102 are each glycosylated (N-linked (GlcNAc...) asparagine).

In terms of assembly, interacts with SLXL1; Co-localize in seminiferous tubules. Interacts with SLY. In terms of processing, N-glycosylated during spermatogenesis. Not N-glycosylated in mature sperm. As to expression, testis-specific. Abundant in the seminiferous tubules where it is associated with developing spermatocytes. Expressed only in testis (at protein level). Not detectable on postnatal days 4 and 9 but after day 18 it gradually increased as the development of testes progressed. Expressed at high levels in testis and at weak levels in epididymis.

It is found in the secreted. Its subcellular location is the cytoplasmic vesicle. It localises to the secretory vesicle. The protein resides in the acrosome. In terms of biological role, involved in fertilization by facilitating sperm penetration of the zona pellucida. May promote spermatocyte apoptosis, thereby limiting sperm production. In adults, may reduce testosterone synthesis in Leydig cells. Is not essential either for development or fertility. The chain is Dickkopf-like protein 1 from Mus musculus (Mouse).